The sequence spans 242 residues: Protein HTATIP2 (242 aa).

Residue Ala2 is modified to N-acetylalanine. Positions 2–25 (AETEALSKLREDFRMQNKSVFILG) are required for interaction with elongation factor EEF1A1. Ser27, Gly28, Glu29, Thr30, Arg52, Arg53, Leu92, Gly93, Tyr143, Lys147, and Arg178 together coordinate NADPH. The active-site Proton acceptor is Tyr143. Lys147 is an active-site residue.

Monomer. Forms homodimers during oxidative stress. Interacts (via N-terminus) with elongation factor EEF1A1 (via middle-region); the interaction is direct and competes with EEF1A1 binding to guanyl-nucleotide exchange factor EEF1B2, thereby inhibiting GDP for GTP exchange and reactivation of EEF1A1. Interacts with nuclear transport receptors XPO4, IPO5/RANBP5, IPO7, IPO9 and KPNB1 as well as GCN1L1/GCN1 and LRPPRC probably through their HEAT repeats. Binds NCOA5/CIA.

The protein localises to the cytoplasm. Its function is as follows. Represses translation by preventing reactivation of elongation factor eEF1A. May also inhibit nuclear import by competing with nuclear import substrates for binding to a subset of nuclear transport receptors. Has additionally been proposed to act as a redox sensor involved in cellular oxidative stress surveillance. In Pan paniscus (Pygmy chimpanzee), this protein is Protein HTATIP2 (HTATIP2).